A 228-amino-acid polypeptide reads, in one-letter code: Large ribosomal subunit protein uL3 (228 aa).

The interval 157–176 is disordered; that stretch reads CHRHAGGTGMSASPSRTFKG.

The protein belongs to the universal ribosomal protein uL3 family. In terms of assembly, part of the 50S ribosomal subunit. Forms a cluster with proteins L14 and L19.

One of the primary rRNA binding proteins, it binds directly near the 3'-end of the 23S rRNA, where it nucleates assembly of the 50S subunit. The polypeptide is Large ribosomal subunit protein uL3 (Rhodopirellula baltica (strain DSM 10527 / NCIMB 13988 / SH1)).